Here is a 139-residue protein sequence, read N- to C-terminus: uncharacterized protein (139 aa).

The 108-residue stretch at Ile-3 to Ile-110 folds into the HIT domain. Residues His-95–His-99 carry the Histidine triad motif motif.

This is an uncharacterized protein from Saccharolobus solfataricus (strain ATCC 35092 / DSM 1617 / JCM 11322 / P2) (Sulfolobus solfataricus).